A 130-amino-acid chain; its full sequence is RxLR effector protein PITG_14783 (130 aa).

An N-terminal signal peptide occupies residues 1 to 20 (MRLPYVFAATMATLLVSSNA). The disordered stretch occupies residues 27 to 58 (AMLSSPNEQHQRQLRSHQTPVEDQEPDEERSL). Positions 38–56 (RQLRSHQTPVEDQEPDEER) match the RxLR-dEER motif.

This sequence belongs to the RxLR effector family.

Its subcellular location is the secreted. The protein resides in the host nucleus. The protein localises to the host cytoplasm. In terms of biological role, effector that enhances P.infestans colonization of Nicotiana benthamiana leaves. In Phytophthora infestans (strain T30-4) (Potato late blight agent), this protein is RxLR effector protein PITG_14783.